A 261-amino-acid chain; its full sequence is Ribonuclease HII (261 aa).

An RNase H type-2 domain is found at 71-259 (KYIAGVDEVG…VKEAKLHFDS (189 aa)). Positions 77, 78, and 169 each coordinate a divalent metal cation.

This sequence belongs to the RNase HII family. It depends on Mn(2+) as a cofactor. Requires Mg(2+) as cofactor.

The protein localises to the cytoplasm. It catalyses the reaction Endonucleolytic cleavage to 5'-phosphomonoester.. In terms of biological role, endonuclease that specifically degrades the RNA of RNA-DNA hybrids. The sequence is that of Ribonuclease HII from Listeria monocytogenes serotype 4b (strain F2365).